Here is a 1801-residue protein sequence, read N- to C-terminus: Protein mono-ADP-ribosyltransferase PARP14 (1801 aa).

Position 33 is a phosphoserine (Ser-33). The interval 109 to 132 is disordered; it reads SKTKEDVKEPDVSEELDTKLPLDG. Macro domains lie at 791–978, 1003–1190, and 1216–1387; these read KCFS…KTVF, WEKG…ARRA, and DSGV…KKRE. Residues Asn-824, Leu-833, 922–926, Asp-961, 1023–1024, Ser-1034, 1046–1049, 1133–1137, 1175–1178, 1235–1236, Ser-1247, Val-1258, 1332–1336, and Phe-1371 each bind a glycoprotein; these read SSGVF, VQ, LSKS, GTGNL, DHEN, DI, and GTGNA. 2 positions are modified to phosphoserine: Ser-1403 and Ser-1411. Residues 1523–1601 form the WWE domain; the sequence is EQESRADCIS…SLSVQRLTKS (79 aa). The 197-residue stretch at 1605-1801 folds into the PARP catalytic domain; sequence IPAHWSDMKQ…YPEYLITFRK (197 aa).

This sequence belongs to the ARTD/PARP family. Interacts with STAT6. Interacts with PARP10. Interacts with PARP9 in IFNG-stimulated macrophages; the interaction prevents PARP14-mediated STAT1 and STAT6 ADP-riboslylation. Post-translationally, auto-ADP-ribosylated. In terms of tissue distribution, expressed in macrophages.

Its subcellular location is the nucleus. It localises to the cytoplasm. The enzyme catalyses L-glutamyl-[protein] + NAD(+) = 5-O-(ADP-D-ribosyl)-L-glutamyl-[protein] + nicotinamide. Functionally, ADP-ribosyltransferase that mediates mono-ADP-ribosylation of glutamate residues on target proteins. In contrast to PARP1 and PARP2, it is not able to mediate poly-ADP-ribosylation. Has been shown to catalyze the mono-ADP-ribosylation of STAT1 at 'Glu-657' and 'Glu-705', thus decreasing STAT1 phosphorylation which negatively regulates pro-inflammatory cytokine production in macrophages in response to IFNG stimulation. However, the role of ADP-ribosylation in the prevention of STAT1 phosphorylation has been called into question and it has been suggested that the inhibition of phosphorylation may be the result of sumoylation of STAT1 'Lys-703'. Mono-ADP-ribosylates STAT6; enhancing STAT6-dependent transcription. In macrophages, positively regulates MRC1 expression in response to IL4 stimulation by promoting STAT6 phosphorylation. Mono-ADP-ribosylates PARP9. In Homo sapiens (Human), this protein is Protein mono-ADP-ribosyltransferase PARP14.